The chain runs to 381 residues: Alpha-methylacyl-CoA racemase (381 aa).

Substrate is bound by residues R36 and 54 to 57; that span reads LDLK. K57 bears the N6-acetyllysine mark. N6-acetyllysine; alternate is present on residues K86 and K100. An N6-succinyllysine; alternate mark is found at K86 and K100. K117 is subject to N6-acetyllysine. 120–125 provides a ligand contact to substrate; it reads GHDINY. The active-site Proton acceptor is the H121. The Proton donor role is filled by D151. K267 carries the N6-succinyllysine modification. The disordered stretch occupies residues 316–344; it reads TDGEQLPSPRPAPLLSRTPAVPSAKRDPS. The Microbody targeting signal motif lies at 379 to 381; it reads ANL.

The protein belongs to the CoA-transferase III family. As to quaternary structure, monomer.

It is found in the peroxisome. It localises to the mitochondrion. The enzyme catalyses a (2S)-2-methylacyl-CoA = a (2R)-2-methylacyl-CoA. It catalyses the reaction (25R)-3alpha,7alpha,12alpha-trihydroxy-5beta-cholestan-26-oyl-CoA = (25S)-3alpha,7alpha,12alpha-trihydroxy-5beta-cholestan-26-oyl-CoA. The catalysed reaction is (2R,6)-dimethylheptanoyl-CoA = (2S,6)-dimethylheptanoyl-CoA. Its pathway is lipid metabolism; bile acid biosynthesis. The protein operates within lipid metabolism; fatty acid metabolism. Functionally, catalyzes the interconversion of (R)- and (S)-stereoisomers of alpha-methyl-branched-chain fatty acyl-CoA esters. Acts only on coenzyme A thioesters, not on free fatty acids, and accepts as substrates a wide range of alpha-methylacyl-CoAs, including pristanoyl-CoA, trihydroxycoprostanoyl-CoA (an intermediate in bile acid synthesis), and arylpropionic acids like the anti-inflammatory drug ibuprofen (2-(4-isobutylphenyl)propionic acid) but neither 3-methyl-branched nor linear-chain acyl-CoAs. The protein is Alpha-methylacyl-CoA racemase (Amacr) of Mus musculus (Mouse).